The following is a 684-amino-acid chain: Pescadillo homolog (684 aa).

The tract at residues 284-352 (DAAAAEASSN…DSDEEADDEA (69 aa)) is disordered. A compositionally biased stretch (low complexity) spans 285–294 (AAAAEASSNA). Basic and acidic residues predominate over residues 296-310 (TRKDGKKLSTRDVKR). Acidic residues predominate over residues 342–352 (QDSDEEADDEA). The BRCT domain maps to 387-486 (PLPMLFSRYV…QILPTDPYRP (100 aa)). 2 disordered regions span residues 508-580 (GYVP…ALLA) and 612-684 (AASL…NKKP). A compositionally biased stretch (acidic residues) spans 528 to 543 (ADEDEDEDEDEDEDED). Basic and acidic residues predominate over residues 544–570 (KAGSGRGDDKNVAAREQDAVEKHDKTP). Over residues 612–624 (AASLKSHKKKKRT) the composition is skewed to basic residues. A compositionally biased stretch (basic and acidic residues) spans 663 to 675 (KKKEEKMRLEAKK).

It belongs to the pescadillo family. As to quaternary structure, component of the NOP7 complex, composed of ERB1, NOP7 and YTM1. The complex is held together by ERB1, which interacts with NOP7 via its N-terminal domain and with YTM1 via a high-affinity interaction between the seven-bladed beta-propeller domains of the 2 proteins. The NOP7 complex associates with the 66S pre-ribosome.

The protein resides in the nucleus. The protein localises to the nucleolus. Its subcellular location is the nucleoplasm. Functionally, component of the NOP7 complex, which is required for maturation of the 25S and 5.8S ribosomal RNAs and formation of the 60S ribosome. The sequence is that of Pescadillo homolog from Malassezia globosa (strain ATCC MYA-4612 / CBS 7966) (Dandruff-associated fungus).